We begin with the raw amino-acid sequence, 95 residues long: Protein TusB (95 aa).

The protein belongs to the DsrH/TusB family. In terms of assembly, heterohexamer, formed by a dimer of trimers. The hexameric TusBCD complex contains 2 copies each of TusB, TusC and TusD. The TusBCD complex interacts with TusE.

The protein localises to the cytoplasm. Part of a sulfur-relay system required for 2-thiolation of 5-methylaminomethyl-2-thiouridine (mnm(5)s(2)U) at tRNA wobble positions. In Escherichia coli O157:H7, this protein is Protein TusB.